Here is a 470-residue protein sequence, read N- to C-terminus: Phosphoribosylamine--glycine ligase (470 aa).

The ATP-grasp domain maps to lysine 115–glutamate 354. Arginine 142–alanine 203 serves as a coordination point for ATP. Positions 324 and 326 each coordinate Mg(2+).

The protein belongs to the GARS family. Mg(2+) is required as a cofactor. Mn(2+) serves as cofactor.

It catalyses the reaction 5-phospho-beta-D-ribosylamine + glycine + ATP = N(1)-(5-phospho-beta-D-ribosyl)glycinamide + ADP + phosphate + H(+). The protein operates within purine metabolism; IMP biosynthesis via de novo pathway; N(1)-(5-phospho-D-ribosyl)glycinamide from 5-phospho-alpha-D-ribose 1-diphosphate: step 2/2. In Archaeoglobus fulgidus (strain ATCC 49558 / DSM 4304 / JCM 9628 / NBRC 100126 / VC-16), this protein is Phosphoribosylamine--glycine ligase (purD).